The following is a 180-amino-acid chain: ATP synthase subunit delta (180 aa).

This sequence belongs to the ATPase delta chain family. F-type ATPases have 2 components, F(1) - the catalytic core - and F(0) - the membrane proton channel. F(1) has five subunits: alpha(3), beta(3), gamma(1), delta(1), epsilon(1). F(0) has three main subunits: a(1), b(2) and c(10-14). The alpha and beta chains form an alternating ring which encloses part of the gamma chain. F(1) is attached to F(0) by a central stalk formed by the gamma and epsilon chains, while a peripheral stalk is formed by the delta and b chains.

The protein resides in the cell inner membrane. Its function is as follows. F(1)F(0) ATP synthase produces ATP from ADP in the presence of a proton or sodium gradient. F-type ATPases consist of two structural domains, F(1) containing the extramembraneous catalytic core and F(0) containing the membrane proton channel, linked together by a central stalk and a peripheral stalk. During catalysis, ATP synthesis in the catalytic domain of F(1) is coupled via a rotary mechanism of the central stalk subunits to proton translocation. This protein is part of the stalk that links CF(0) to CF(1). It either transmits conformational changes from CF(0) to CF(1) or is implicated in proton conduction. The chain is ATP synthase subunit delta from Acidovorax sp. (strain JS42).